We begin with the raw amino-acid sequence, 346 residues long: Oxidoreductase calI (346 aa).

A disordered region spans residues 11–33; that stretch reads VSTPQGRGDGRPTADQVLRDQDP. Over residues 18-32 the composition is skewed to basic and acidic residues; the sequence is GDGRPTADQVLRDQD. The NADP(+) site is built by Leu-52, Lys-76, Asp-100, and Asn-128. Ser-181 functions as the Proton donor in the catalytic mechanism. Residues Tyr-208, Lys-212, and Ile-241 each contribute to the NADP(+) site. Tyr-208 (proton acceptor) is an active-site residue. Lys-212 serves as the catalytic Lowers pKa of active site Tyr.

It belongs to the short-chain dehydrogenases/reductases (SDR) family.

The protein operates within secondary metabolite biosynthesis. Oxidoreductase; part of the gene cluster that mediates the biosynthesis of calbistrin A and related compounds. Calbistrin A is a secondary metabolite with an interesting structure that was recently found to have bioactivity against leukemia cells. It consists of two polyketides linked by an ester bond: a bicyclic decalin containing polyketide and a linear 12 carbon dioic acid structure. The polyketide synthase calA is probably responsible for forming the decalin moiety. Because calA lacks a designated enoylreductase (ER) domain, the required activity is provided by the trans-enoyl reductase calK. Following release from the PKS, calF then probably catalyzes the oxidation and the subsequent Diels Alder cycloisomerization that lead to the formation of the decalin moiety. The decalin polyketide backbone includes two C-methyl groups, at C7 and C11 in backbone, of which the C7 position is probably methylated by the methyltransferase domain of calA. A candidate for adding the methyl group at C11, if not done by CalA, is the cluster methyltransferase calH. Several additional tailoring enzymes within the cluster could be involved in the modification of the decalin polyketide product. Those include the 3 cytochrome P450 monooxygenases CalE, CalG and CalL, of which one might be responsible for the introduction of the extra hydroxyl group attached to the backbone of the decalin moiety, at position C9 in the backbone, that allows for attachment of the linear moiety. One tailoring enzyme activity that is expected to be involved in biosynthesis of calbistrin is an acyltransferase for connecting the two polyketide synthase products, and which could be performed by the cluster acyltransferase calJ. The enzyme responsible for the biosynthesis of the linear moiety, probably a second PKS, has not been identified yet. The protein is Oxidoreductase calI of Penicillium decumbens.